The chain runs to 444 residues: ATP-dependent protease ATPase subunit HslU (444 aa).

ATP is bound by residues I18, 60 to 65 (GVGKTE), D256, E322, and R394.

It belongs to the ClpX chaperone family. HslU subfamily. In terms of assembly, a double ring-shaped homohexamer of HslV is capped on each side by a ring-shaped HslU homohexamer. The assembly of the HslU/HslV complex is dependent on binding of ATP.

The protein resides in the cytoplasm. Its function is as follows. ATPase subunit of a proteasome-like degradation complex; this subunit has chaperone activity. The binding of ATP and its subsequent hydrolysis by HslU are essential for unfolding of protein substrates subsequently hydrolyzed by HslV. HslU recognizes the N-terminal part of its protein substrates and unfolds these before they are guided to HslV for hydrolysis. This Serratia proteamaculans (strain 568) protein is ATP-dependent protease ATPase subunit HslU.